A 607-amino-acid chain; its full sequence is 1-deoxy-D-xylulose-5-phosphate synthase (607 aa).

Residues His63 and 104–106 (GHS) each bind thiamine diphosphate. Asp135 serves as a coordination point for Mg(2+). Thiamine diphosphate-binding positions include 136–137 (GA), Asn164, Tyr271, and Glu351. Asn164 is a binding site for Mg(2+).

The protein belongs to the transketolase family. DXPS subfamily. As to quaternary structure, homodimer. It depends on Mg(2+) as a cofactor. Requires thiamine diphosphate as cofactor.

The catalysed reaction is D-glyceraldehyde 3-phosphate + pyruvate + H(+) = 1-deoxy-D-xylulose 5-phosphate + CO2. It functions in the pathway metabolic intermediate biosynthesis; 1-deoxy-D-xylulose 5-phosphate biosynthesis; 1-deoxy-D-xylulose 5-phosphate from D-glyceraldehyde 3-phosphate and pyruvate: step 1/1. Catalyzes the acyloin condensation reaction between C atoms 2 and 3 of pyruvate and glyceraldehyde 3-phosphate to yield 1-deoxy-D-xylulose-5-phosphate (DXP). The sequence is that of 1-deoxy-D-xylulose-5-phosphate synthase from Campylobacter hominis (strain ATCC BAA-381 / DSM 21671 / CCUG 45161 / LMG 19568 / NCTC 13146 / CH001A).